The primary structure comprises 219 residues: Probable N-acetyltransferase camello (219 aa).

2 helical membrane passes run 44–64 (FITFVAFTSVFMGTGSYVLAL) and 66–86 (SLVALLAAGWYGLYSEFHGLA). Positions 62–211 (LALTSLVALL…VHQYTSFTVA (150 aa)) constitute an N-acetyltransferase domain.

The protein belongs to the camello family.

It is found in the golgi apparatus membrane. Functionally, plays a role in regulation of gastrulation, possibly by controlled reduction of cell adhesion in the periblastopore region which is necessary for optimal cell motility. The protein is Probable N-acetyltransferase camello of Xenopus tropicalis (Western clawed frog).